Consider the following 292-residue polypeptide: Acetylglutamate kinase (292 aa).

Substrate-binding positions include 72-73 (GG), Arg94, and Asn187.

Belongs to the acetylglutamate kinase family. ArgB subfamily.

It localises to the cytoplasm. The enzyme catalyses N-acetyl-L-glutamate + ATP = N-acetyl-L-glutamyl 5-phosphate + ADP. The protein operates within amino-acid biosynthesis; L-arginine biosynthesis; N(2)-acetyl-L-ornithine from L-glutamate: step 2/4. Functionally, catalyzes the ATP-dependent phosphorylation of N-acetyl-L-glutamate. The protein is Acetylglutamate kinase of Trichodesmium erythraeum (strain IMS101).